The primary structure comprises 458 residues: Bifunctional protein GlmU (458 aa).

Residues 1–229 (MTNYAIILAA…FNESLGVNDR (229 aa)) form a pyrophosphorylase region. UDP-N-acetyl-alpha-D-glucosamine-binding positions include 8–11 (LAAG), Lys22, Gln72, and 77–78 (GT). Residue Asp102 participates in Mg(2+) binding. UDP-N-acetyl-alpha-D-glucosamine is bound by residues Gly139, Glu154, Asn169, and Asn227. A Mg(2+)-binding site is contributed by Asn227. The tract at residues 230-250 (VALATAESVMRRRINKAHMIN) is linker. Residues 251–458 (GVTFQNPDAT…AKRLPHYPQK (208 aa)) are N-acetyltransferase. Arg332 and Lys350 together coordinate UDP-N-acetyl-alpha-D-glucosamine. The Proton acceptor role is filled by His362. Tyr365 and Asn376 together coordinate UDP-N-acetyl-alpha-D-glucosamine. Residues Ala379, 385 to 386 (NY), Ser404, Ala422, and Arg439 contribute to the acetyl-CoA site.

This sequence in the N-terminal section; belongs to the N-acetylglucosamine-1-phosphate uridyltransferase family. It in the C-terminal section; belongs to the transferase hexapeptide repeat family. As to quaternary structure, homotrimer. The cofactor is Mg(2+).

It is found in the cytoplasm. It catalyses the reaction alpha-D-glucosamine 1-phosphate + acetyl-CoA = N-acetyl-alpha-D-glucosamine 1-phosphate + CoA + H(+). The catalysed reaction is N-acetyl-alpha-D-glucosamine 1-phosphate + UTP + H(+) = UDP-N-acetyl-alpha-D-glucosamine + diphosphate. The protein operates within nucleotide-sugar biosynthesis; UDP-N-acetyl-alpha-D-glucosamine biosynthesis; N-acetyl-alpha-D-glucosamine 1-phosphate from alpha-D-glucosamine 6-phosphate (route II): step 2/2. Its pathway is nucleotide-sugar biosynthesis; UDP-N-acetyl-alpha-D-glucosamine biosynthesis; UDP-N-acetyl-alpha-D-glucosamine from N-acetyl-alpha-D-glucosamine 1-phosphate: step 1/1. It functions in the pathway bacterial outer membrane biogenesis; LPS lipid A biosynthesis. Catalyzes the last two sequential reactions in the de novo biosynthetic pathway for UDP-N-acetylglucosamine (UDP-GlcNAc). The C-terminal domain catalyzes the transfer of acetyl group from acetyl coenzyme A to glucosamine-1-phosphate (GlcN-1-P) to produce N-acetylglucosamine-1-phosphate (GlcNAc-1-P), which is converted into UDP-GlcNAc by the transfer of uridine 5-monophosphate (from uridine 5-triphosphate), a reaction catalyzed by the N-terminal domain. The polypeptide is Bifunctional protein GlmU (Streptococcus uberis (strain ATCC BAA-854 / 0140J)).